A 402-amino-acid polypeptide reads, in one-letter code: Probable 2,3-bisphosphoglycerate-independent phosphoglycerate mutase (402 aa).

This sequence belongs to the BPG-independent phosphoglycerate mutase family. A-PGAM subfamily.

It catalyses the reaction (2R)-2-phosphoglycerate = (2R)-3-phosphoglycerate. The protein operates within carbohydrate degradation; glycolysis; pyruvate from D-glyceraldehyde 3-phosphate: step 3/5. Its function is as follows. Catalyzes the interconversion of 2-phosphoglycerate and 3-phosphoglycerate. The chain is Probable 2,3-bisphosphoglycerate-independent phosphoglycerate mutase from Thermosipho africanus (strain TCF52B).